Here is a 173-residue protein sequence, read N- to C-terminus: ATP synthase subunit delta (173 aa).

The protein belongs to the ATPase delta chain family. F-type ATPases have 2 components, F(1) - the catalytic core - and F(0) - the membrane proton channel. F(1) has five subunits: alpha(3), beta(3), gamma(1), delta(1), epsilon(1). F(0) has three main subunits: a(1), b(2) and c(10-14). The alpha and beta chains form an alternating ring which encloses part of the gamma chain. F(1) is attached to F(0) by a central stalk formed by the gamma and epsilon chains, while a peripheral stalk is formed by the delta and b chains.

It is found in the cell inner membrane. Its function is as follows. F(1)F(0) ATP synthase produces ATP from ADP in the presence of a proton or sodium gradient. F-type ATPases consist of two structural domains, F(1) containing the extramembraneous catalytic core and F(0) containing the membrane proton channel, linked together by a central stalk and a peripheral stalk. During catalysis, ATP synthesis in the catalytic domain of F(1) is coupled via a rotary mechanism of the central stalk subunits to proton translocation. This protein is part of the stalk that links CF(0) to CF(1). It either transmits conformational changes from CF(0) to CF(1) or is implicated in proton conduction. The chain is ATP synthase subunit delta from Campylobacter lari (strain RM2100 / D67 / ATCC BAA-1060).